We begin with the raw amino-acid sequence, 343 residues long: N-acetyl-gamma-glutamyl-phosphate reductase (343 aa).

Cysteine 147 is an active-site residue.

This sequence belongs to the NAGSA dehydrogenase family. Type 1 subfamily.

Its subcellular location is the cytoplasm. It carries out the reaction N-acetyl-L-glutamate 5-semialdehyde + phosphate + NADP(+) = N-acetyl-L-glutamyl 5-phosphate + NADPH + H(+). It functions in the pathway amino-acid biosynthesis; L-arginine biosynthesis; N(2)-acetyl-L-ornithine from L-glutamate: step 3/4. Catalyzes the NADPH-dependent reduction of N-acetyl-5-glutamyl phosphate to yield N-acetyl-L-glutamate 5-semialdehyde. This chain is N-acetyl-gamma-glutamyl-phosphate reductase, found in Listeria monocytogenes serotype 4b (strain CLIP80459).